Consider the following 313-residue polypeptide: PDCD10 and GCKIII kinases-associated protein 1 (313 aa).

The disordered stretch occupies residues 42–95; it reads KGTQNSEVEVPGSTLHSGSLSKPDSSGSTTGLPCQGSLTQEDSEERPCVEKHGI. Low complexity predominate over residues 58 to 69; sequence SGSLSKPDSSGS. Position 60 is a phosphoserine (Ser60). The segment covering 70–81 has biased composition (polar residues); sequence TTGLPCQGSLTQ. Thr104 is subject to Phosphothreonine. Phosphoserine occurs at positions 107, 237, and 240. Positions 253-288 are disordered; that stretch reads YFKEEDPTQPTPVADPGNEREDPHTYNGNKEGAVVD.

Interacts with KEAP1; this interaction prevents the ubiquitination of KEAP1 by TRIM25, thus protecting KEAP1 from degradation. Found in association with PDCD10 and members of the STE20 kinases, such as STK24, STK25, and STK26.

It is found in the cell membrane. Functionally, acts as a tumor suppressor. Acts as a tumor suppressor for colorectal cancer cell proliferation by targeting KEAP1/USP17/ELK1/CDK6 axis. The chain is PDCD10 and GCKIII kinases-associated protein 1 from Rattus norvegicus (Rat).